The sequence spans 360 residues: UDP-N-acetylglucosamine--N-acetylmuramyl-(pentapeptide) pyrophosphoryl-undecaprenol N-acetylglucosamine transferase (360 aa).

Residues 12-14 (TAG), Ser198, and Gln289 contribute to the UDP-N-acetyl-alpha-D-glucosamine site.

Belongs to the glycosyltransferase 28 family. MurG subfamily.

It is found in the cell membrane. It carries out the reaction Mur2Ac(oyl-L-Ala-gamma-D-Glu-L-Lys-D-Ala-D-Ala)-di-trans,octa-cis-undecaprenyl diphosphate + UDP-N-acetyl-alpha-D-glucosamine = beta-D-GlcNAc-(1-&gt;4)-Mur2Ac(oyl-L-Ala-gamma-D-Glu-L-Lys-D-Ala-D-Ala)-di-trans,octa-cis-undecaprenyl diphosphate + UDP + H(+). It functions in the pathway cell wall biogenesis; peptidoglycan biosynthesis. In terms of biological role, cell wall formation. Catalyzes the transfer of a GlcNAc subunit on undecaprenyl-pyrophosphoryl-MurNAc-pentapeptide (lipid intermediate I) to form undecaprenyl-pyrophosphoryl-MurNAc-(pentapeptide)GlcNAc (lipid intermediate II). This is UDP-N-acetylglucosamine--N-acetylmuramyl-(pentapeptide) pyrophosphoryl-undecaprenol N-acetylglucosamine transferase from Streptococcus equi subsp. equi (strain 4047).